The sequence spans 237 residues: F-box only protein 50 (237 aa).

Positions Val-31–Ala-231 constitute an FBA domain. A disordered region spans residues Asn-40 to Gly-82. Over residues Ile-64–Leu-74 the composition is skewed to pro residues.

Expressed in nonspecific cytotoxic cells (NCC).

The protein localises to the cytoplasm. Functionally, may promote cell proliferation. This Danio rerio (Zebrafish) protein is F-box only protein 50 (nccrp1).